The chain runs to 1039 residues: Beta-galactosidase (1039 aa).

Substrate is bound by residues Asn103 and Asp201. Asp201 lines the Na(+) pocket. Mg(2+) contacts are provided by Glu415, His417, and Glu460. Residues Glu460 and 536–539 contribute to the substrate site; that span reads EYAH. Catalysis depends on Glu460, which acts as the Proton donor. Glu536 serves as the catalytic Nucleophile. Residue Asn596 coordinates Mg(2+). Phe600 and Asn603 together coordinate Na(+). 2 residues coordinate substrate: Asn603 and Trp1012.

Belongs to the glycosyl hydrolase 2 family. As to quaternary structure, homotetramer. It depends on Mg(2+) as a cofactor. Na(+) serves as cofactor.

It carries out the reaction Hydrolysis of terminal non-reducing beta-D-galactose residues in beta-D-galactosides.. Inhibited by zinc, copper and nickel ions. Activated by 2-mercaptoethanol and inhibited by EDTA in vitro. In Pseudoalteromonas haloplanktis (Alteromonas haloplanktis), this protein is Beta-galactosidase (lacZ).